Here is a 725-residue protein sequence, read N- to C-terminus: IML2-like protein YKR018C (725 aa).

At threonine 196 the chain carries Phosphothreonine. Serine 246, serine 377, and serine 380 each carry phosphoserine.

Belongs to the IML2 family.

It localises to the cytoplasm. Its subcellular location is the nucleus. The protein is IML2-like protein YKR018C of Saccharomyces cerevisiae (strain ATCC 204508 / S288c) (Baker's yeast).